The following is a 156-amino-acid chain: Small ribosomal subunit protein uS7 (156 aa).

It belongs to the universal ribosomal protein uS7 family. As to quaternary structure, part of the 30S ribosomal subunit. Contacts proteins S9 and S11.

Functionally, one of the primary rRNA binding proteins, it binds directly to 16S rRNA where it nucleates assembly of the head domain of the 30S subunit. Is located at the subunit interface close to the decoding center, probably blocks exit of the E-site tRNA. This chain is Small ribosomal subunit protein uS7, found in Yersinia enterocolitica serotype O:8 / biotype 1B (strain NCTC 13174 / 8081).